Here is a 446-residue protein sequence, read N- to C-terminus: MADYLTVTHLTKYLKLKFDRDPYLERVYLTGQVSNFRKRPTHQYFSLKDESAVIQATMWAGVYKKLGFDLEEGMKINVIGRVQLYEPSGSYSIVIEKAEPDGIGALALQFEQLKKKLTAEGYFEQKHKQPLPQFVSKIGVITSPSGAVIRDIITTVSRRFPGVEILLFPTKVQGDGAAQEVVANIRRANQREDLDLLIVGRGGGSIEDLWAFNEEIVVQAIFESQLPVISSVGHETDTTLADFVADRRAATPTAAAELATPITKTDLMSWIVERQNRSYQACLRRIKQRQEWVDKLSQSVIFRQPERLYDAYLQKIDRLSMTLMNTMKDRLSSAKENKVQLDHALANSQLQTKIERYQDRVATAKRLLMANMASQYDSQLARFEKAQDALLSLDASRIIARGYAMIEKNQALVASVSQITKGDQLTIKMRDGQLDVEVKDVKNENI.

The protein belongs to the XseA family. In terms of assembly, heterooligomer composed of large and small subunits.

It localises to the cytoplasm. The enzyme catalyses Exonucleolytic cleavage in either 5'- to 3'- or 3'- to 5'-direction to yield nucleoside 5'-phosphates.. Bidirectionally degrades single-stranded DNA into large acid-insoluble oligonucleotides, which are then degraded further into small acid-soluble oligonucleotides. The chain is Exodeoxyribonuclease 7 large subunit from Streptococcus pyogenes serotype M3 (strain ATCC BAA-595 / MGAS315).